The primary structure comprises 132 residues: D-ribose pyranase (132 aa).

H20 acts as the Proton donor in catalysis. Residues D28, H99, and 121–123 each bind substrate; that span reads YAN.

This sequence belongs to the RbsD / FucU family. RbsD subfamily. As to quaternary structure, homodecamer.

Its subcellular location is the cytoplasm. The enzyme catalyses beta-D-ribopyranose = beta-D-ribofuranose. Its pathway is carbohydrate metabolism; D-ribose degradation; D-ribose 5-phosphate from beta-D-ribopyranose: step 1/2. Catalyzes the interconversion of beta-pyran and beta-furan forms of D-ribose. In Chromobacterium violaceum (strain ATCC 12472 / DSM 30191 / JCM 1249 / CCUG 213 / NBRC 12614 / NCIMB 9131 / NCTC 9757 / MK), this protein is D-ribose pyranase.